We begin with the raw amino-acid sequence, 435 residues long: Histidine--tRNA ligase (435 aa).

The interval 415 to 435 (SVPLSAFPGDYDRPTFEDFAE) is disordered. The segment covering 424–435 (DYDRPTFEDFAE) has biased composition (basic and acidic residues).

This sequence belongs to the class-II aminoacyl-tRNA synthetase family.

Its subcellular location is the cytoplasm. It catalyses the reaction tRNA(His) + L-histidine + ATP = L-histidyl-tRNA(His) + AMP + diphosphate + H(+). The polypeptide is Histidine--tRNA ligase (Haloarcula marismortui (strain ATCC 43049 / DSM 3752 / JCM 8966 / VKM B-1809) (Halobacterium marismortui)).